We begin with the raw amino-acid sequence, 60 residues long: Large ribosomal subunit protein bL32A (60 aa).

A compositionally biased stretch (basic residues) spans 1–19; that stretch reads MAVPKRRMSRSNTRSRRSQ. Positions 1–21 are disordered; it reads MAVPKRRMSRSNTRSRRSQWK.

This sequence belongs to the bacterial ribosomal protein bL32 family.

This chain is Large ribosomal subunit protein bL32A, found in Nocardia farcinica (strain IFM 10152).